The following is a 357-amino-acid chain: MADAAVIEKLEEGFKKLEAATDCKSLLKKYLTKSVFDQLKGKKTSLGATLLDVIQSGVENLDSGVGVYAPDAEAYTLFAPLFDPIIEDYHKGFKQTDKHPNKDFGDVNQFVNVDPDGKFVISTRVRCGRSMEGYPFNPCLTEAQYKEMESKVSSTLSNLEGELKGTYYPLTGMTKDVQQKLIDDHFLFKEGDRFLQAANACRYWPTGRGIYHNDNKTFLVWCNEEDHLRIISMQMGGDLGQVYRRLVSAVNEIEKRVPFSHHDRLGFLTFCPTNLGTTVRASVHIKLPKLAANREKLEEVAGKYSLQVRGTRGEHTEAEGGVYDISNKRRMGLTEFQAVKEMQDGILELIKIEKEMQ.

The region spanning 9–91 (KLEEGFKKLE…FDPIIEDYHK (83 aa)) is the Phosphagen kinase N-terminal domain. 64-68 (GVGVY) serves as a coordination point for L-arginine. IgE-binding and beta-hexosaminidase release from rat basophilic leukemia (RBL) cells stretches follow at residues 113–127 (VDPD…RVRC) and 127–155 (CGRS…VSST). The 238-residue stretch at 119–356 (FVISTRVRCG…LELIKIEKEM (238 aa)) folds into the Phosphagen kinase C-terminal domain. An ATP-binding site is contributed by 122-126 (STRVR). His-185 provides a ligand contact to ATP. Residues Cys-201 and Cys-271 are joined by a disulfide bond. The segment at 204 to 218 (WPTGRGIYHNDNKTF) is igE-binding and beta-hexosaminidase release from rat basophilic leukemia (RBL) cells. The segment at 211–225 (YHNDNKTFLVWCNEE) is igE-binding, but no beta-hexosaminidase release from rat basophilic leukemia (RBL) cells. Glu-225 contributes to the L-arginine binding site. Arg-229 contacts ATP. Cys-271 lines the L-arginine pocket. ATP contacts are provided by residues 280 to 284 (RASVH) and 309 to 314 (RGTRGE). Glu-314 lines the L-arginine pocket. The tract at residues 316-330 (TEAEGGVYDISNKRR) is igE-binding, but no beta-hexosaminidase release from rat basophilic leukemia (RBL) cells.

This sequence belongs to the ATP:guanido phosphotransferase family. Glycosylated. In terms of tissue distribution, muscle (at protein level).

It carries out the reaction L-arginine + ATP = N(omega)-phospho-L-arginine + ADP + H(+). Its function is as follows. Catalyzes the reversible transfer of high energy ATP gamma-phosphate group to L-arginine. The protein is Arginine kinase Scy p 2.0101 of Scylla paramamosain (Mud crab).